We begin with the raw amino-acid sequence, 245 residues long: 1-(5-phosphoribosyl)-5-[(5-phosphoribosylamino)methylideneamino] imidazole-4-carboxamide isomerase (245 aa).

Catalysis depends on Asp-8, which acts as the Proton acceptor. The active-site Proton donor is Asp-131.

The protein belongs to the HisA/HisF family.

It localises to the cytoplasm. The enzyme catalyses 1-(5-phospho-beta-D-ribosyl)-5-[(5-phospho-beta-D-ribosylamino)methylideneamino]imidazole-4-carboxamide = 5-[(5-phospho-1-deoxy-D-ribulos-1-ylimino)methylamino]-1-(5-phospho-beta-D-ribosyl)imidazole-4-carboxamide. It participates in amino-acid biosynthesis; L-histidine biosynthesis; L-histidine from 5-phospho-alpha-D-ribose 1-diphosphate: step 4/9. The polypeptide is 1-(5-phosphoribosyl)-5-[(5-phosphoribosylamino)methylideneamino] imidazole-4-carboxamide isomerase (Neisseria meningitidis serogroup C (strain 053442)).